The sequence spans 191 residues: Peptidyl-tRNA hydrolase (191 aa).

Residue Tyr-16 participates in tRNA binding. The active-site Proton acceptor is the His-21. Positions 67, 69, and 115 each coordinate tRNA.

This sequence belongs to the PTH family. In terms of assembly, monomer.

The protein resides in the cytoplasm. It carries out the reaction an N-acyl-L-alpha-aminoacyl-tRNA + H2O = an N-acyl-L-amino acid + a tRNA + H(+). Hydrolyzes ribosome-free peptidyl-tRNAs (with 1 or more amino acids incorporated), which drop off the ribosome during protein synthesis, or as a result of ribosome stalling. Functionally, catalyzes the release of premature peptidyl moieties from peptidyl-tRNA molecules trapped in stalled 50S ribosomal subunits, and thus maintains levels of free tRNAs and 50S ribosomes. This chain is Peptidyl-tRNA hydrolase, found in Ruthia magnifica subsp. Calyptogena magnifica.